We begin with the raw amino-acid sequence, 675 residues long: PML-RARA-regulated adapter molecule 1 (675 aa).

Polar residues predominate over residues 1–19; sequence MGSNQDFRNLQAKFQTSQP. Disordered regions lie at residues 1–473 and 523–562; these read MGSN…GPIN and TDDS…PQQL. Positions 23-35 are enriched in basic and acidic residues; that stretch reads ELFRKTPKPELNK. Polar residues predominate over residues 43 to 58; that stretch reads TELSEQPKKSSQSELS. Residues 141–150 are compositionally biased toward basic and acidic residues; sequence PKPEFGELSK. Polar residues-rich tracts occupy residues 224–242, 251–264, and 322–331; these read RKSQ…SPSK, HSPQ…PKNN, and LQPSDLTRAS. Ser-374 carries the phosphoserine modification. Positions 407 to 422 are enriched in polar residues; it reads SECSLPSASAGSSPQC. The segment covering 462-471 has biased composition (pro residues); that stretch reads PAKPALPPGP. The segment covering 537–546 has biased composition (polar residues); it reads LSTQQATRWP. An SH3 domain is found at 578 to 656; the sequence is KAEREFRKKF…PRTALLPLET (79 aa).

As to quaternary structure, interacts with SKAP2, LCP2 and DBNL. May interact with LYN. Interacts with NEK6. Post-translationally, may be phosphorylated on tyrosines. In terms of tissue distribution, expressed in bone marrow and mature neutrophils. Weakly expressed in macrophages and mast cells.

May be involved in integrin signaling in neutrophils. Binds to PtdIns(4)P. The polypeptide is PML-RARA-regulated adapter molecule 1 (Pram1) (Mus musculus (Mouse)).